We begin with the raw amino-acid sequence, 429 residues long: Serum response factor-binding protein 1 (429 aa).

Ala-2 bears the N-acetylalanine mark. Coiled coils occupy residues 42–67 and 108–144; these read KGTEDALLKNQRRAQRLLEEIHAMKE and LLKKKIDVLKAAVQAFKEARQNVTEVESSKNASEDNH. Composition is skewed to polar residues over residues 128-138 and 146-160; these read QNVTEVESSKN and KNTLYSNDNGSNLQR. Disordered regions lie at residues 128-285 and 311-429; these read QNVT…GDDF and EKVF…TFDD. Positions 183 to 195 are enriched in basic and acidic residues; sequence NSKEKIAKMEHGP. Lys-190 participates in a covalent cross-link: Glycyl lysine isopeptide (Lys-Gly) (interchain with G-Cter in SUMO2). Phosphoserine is present on residues Ser-203, Ser-205, Ser-264, Ser-279, and Ser-281. Residues 249–265 show a composition bias toward acidic residues; that stretch reads GGEELCEEEKEYFDDST. The segment covering 311 to 341 has biased composition (basic and acidic residues); it reads EKVFLKEDTGETHGDTRNDKTKPSTETRKLE. Residue Lys-316 forms a Glycyl lysine isopeptide (Lys-Gly) (interchain with G-Cter in SUMO2) linkage. Phosphoserine occurs at positions 349, 351, and 367. A compositionally biased stretch (basic and acidic residues) spans 357 to 367; the sequence is NFKEQAPKTRS. Polar residues predominate over residues 373–383; the sequence is NEPQFKNQFNK.

In terms of assembly, interacts with SRF. Forms complexes with SRF and SRF cofactors ARID2, MYOCD and NKX2-5. Interacts with the N-terminus of SLC2A4.

It localises to the cytoplasm. Its subcellular location is the perinuclear region. Its function is as follows. May be involved in regulating transcriptional activation of cardiac genes during the aging process. May play a role in biosynthesis and/or processing of SLC2A4 in adipose cells. This chain is Serum response factor-binding protein 1, found in Pongo abelii (Sumatran orangutan).